Here is a 141-residue protein sequence, read N- to C-terminus: Large ribosomal subunit protein uL13 (141 aa).

It belongs to the universal ribosomal protein uL13 family. Part of the 50S ribosomal subunit.

This protein is one of the early assembly proteins of the 50S ribosomal subunit, although it is not seen to bind rRNA by itself. It is important during the early stages of 50S assembly. The protein is Large ribosomal subunit protein uL13 of Helicobacter pylori (strain P12).